An 862-amino-acid polypeptide reads, in one-letter code: Protein kintoun (862 aa).

Disordered regions lie at residues 208–229, 564–602, 626–670, and 743–854; these read KLLP…RTTK, TKRE…KKER, GEGA…STMP, and RREV…QFKS. The segment covering 564–586 has biased composition (basic and acidic residues); that stretch reads TKREEHGEPECDEKDGSEAEKAR. The segment covering 587–601 has biased composition (basic residues); it reads TLQKAKRNSRKKKKE. Composition is skewed to basic and acidic residues over residues 748–757 and 766–785; these read RRADARRMSE and KDAH…HDEK.

The protein belongs to the PIH1 family. Kintoun subfamily.

The protein resides in the cytoplasm. Its function is as follows. Required for cytoplasmic pre-assembly of axonemal dyneins, thereby playing a central role in motility in cilia and flagella. Involved in pre-assembly of dynein arm complexes in the cytoplasm before intraflagellar transport loads them for the ciliary compartment. The polypeptide is Protein kintoun (Anopheles gambiae (African malaria mosquito)).